The following is a 357-amino-acid chain: DNA replication and repair protein RecF (357 aa).

Position 30–37 (30–37) interacts with ATP; it reads GANGSGKT.

It belongs to the RecF family.

It is found in the cytoplasm. Its function is as follows. The RecF protein is involved in DNA metabolism; it is required for DNA replication and normal SOS inducibility. RecF binds preferentially to single-stranded, linear DNA. It also seems to bind ATP. In Salmonella heidelberg (strain SL476), this protein is DNA replication and repair protein RecF.